We begin with the raw amino-acid sequence, 302 residues long: Ribosomal RNA small subunit methyltransferase H (302 aa).

Residues 43–45 (GGH), aspartate 62, phenylalanine 89, aspartate 105, and histidine 112 each bind S-adenosyl-L-methionine. The disordered stretch occupies residues 276-302 (EIANNPRSRSAKLRIAEKQAETGDEDN).

It belongs to the methyltransferase superfamily. RsmH family.

The protein resides in the cytoplasm. The catalysed reaction is cytidine(1402) in 16S rRNA + S-adenosyl-L-methionine = N(4)-methylcytidine(1402) in 16S rRNA + S-adenosyl-L-homocysteine + H(+). Functionally, specifically methylates the N4 position of cytidine in position 1402 (C1402) of 16S rRNA. This chain is Ribosomal RNA small subunit methyltransferase H, found in Nostoc sp. (strain PCC 7120 / SAG 25.82 / UTEX 2576).